The chain runs to 102 residues: A-type ATP synthase subunit F (102 aa).

It belongs to the V-ATPase F subunit family. As to quaternary structure, has multiple subunits with at least A(3), B(3), C, D, E, F, H, I and proteolipid K(x).

Its subcellular location is the cell membrane. Its function is as follows. Component of the A-type ATP synthase that produces ATP from ADP in the presence of a proton gradient across the membrane. The protein is A-type ATP synthase subunit F of Thermococcus sibiricus (strain DSM 12597 / MM 739).